The following is a 361-amino-acid chain: Holliday junction branch migration complex subunit RuvB (361 aa).

The segment at Met-1–Tyr-183 is large ATPase domain (RuvB-L). Residues Leu-22, Arg-23, Gly-64, Lys-67, Thr-68, Thr-69, Glu-130–Phe-132, Arg-173, Tyr-183, and Arg-220 each bind ATP. Thr-68 lines the Mg(2+) pocket. A small ATPAse domain (RuvB-S) region spans residues Ser-184–Glu-254. The head domain (RuvB-H) stretch occupies residues Lys-257–Gln-361. The DNA site is built by Arg-312 and Arg-317.

Belongs to the RuvB family. As to quaternary structure, homohexamer. Forms an RuvA(8)-RuvB(12)-Holliday junction (HJ) complex. HJ DNA is sandwiched between 2 RuvA tetramers; dsDNA enters through RuvA and exits via RuvB. An RuvB hexamer assembles on each DNA strand where it exits the tetramer. Each RuvB hexamer is contacted by two RuvA subunits (via domain III) on 2 adjacent RuvB subunits; this complex drives branch migration. In the full resolvosome a probable DNA-RuvA(4)-RuvB(12)-RuvC(2) complex forms which resolves the HJ.

It localises to the cytoplasm. It carries out the reaction ATP + H2O = ADP + phosphate + H(+). Its function is as follows. The RuvA-RuvB-RuvC complex processes Holliday junction (HJ) DNA during genetic recombination and DNA repair, while the RuvA-RuvB complex plays an important role in the rescue of blocked DNA replication forks via replication fork reversal (RFR). RuvA specifically binds to HJ cruciform DNA, conferring on it an open structure. The RuvB hexamer acts as an ATP-dependent pump, pulling dsDNA into and through the RuvAB complex. RuvB forms 2 homohexamers on either side of HJ DNA bound by 1 or 2 RuvA tetramers; 4 subunits per hexamer contact DNA at a time. Coordinated motions by a converter formed by DNA-disengaged RuvB subunits stimulates ATP hydrolysis and nucleotide exchange. Immobilization of the converter enables RuvB to convert the ATP-contained energy into a lever motion, pulling 2 nucleotides of DNA out of the RuvA tetramer per ATP hydrolyzed, thus driving DNA branch migration. The RuvB motors rotate together with the DNA substrate, which together with the progressing nucleotide cycle form the mechanistic basis for DNA recombination by continuous HJ branch migration. Branch migration allows RuvC to scan DNA until it finds its consensus sequence, where it cleaves and resolves cruciform DNA. This chain is Holliday junction branch migration complex subunit RuvB, found in Pseudarthrobacter chlorophenolicus (strain ATCC 700700 / DSM 12829 / CIP 107037 / JCM 12360 / KCTC 9906 / NCIMB 13794 / A6) (Arthrobacter chlorophenolicus).